Reading from the N-terminus, the 523-residue chain is Light-independent protochlorophyllide reductase subunit B (523 aa).

[4Fe-4S] cluster is bound at residue aspartate 36. Catalysis depends on aspartate 290, which acts as the Proton donor. Position 425–426 (425–426) interacts with substrate; sequence GL.

The protein belongs to the ChlB/BchB/BchZ family. As to quaternary structure, protochlorophyllide reductase is composed of three subunits; ChlL, ChlN and ChlB. Forms a heterotetramer of two ChlB and two ChlN subunits. It depends on [4Fe-4S] cluster as a cofactor.

It carries out the reaction chlorophyllide a + oxidized 2[4Fe-4S]-[ferredoxin] + 2 ADP + 2 phosphate = protochlorophyllide a + reduced 2[4Fe-4S]-[ferredoxin] + 2 ATP + 2 H2O. It functions in the pathway porphyrin-containing compound metabolism; chlorophyll biosynthesis (light-independent). In terms of biological role, component of the dark-operative protochlorophyllide reductase (DPOR) that uses Mg-ATP and reduced ferredoxin to reduce ring D of protochlorophyllide (Pchlide) to form chlorophyllide a (Chlide). This reaction is light-independent. The NB-protein (ChlN-ChlB) is the catalytic component of the complex. This is Light-independent protochlorophyllide reductase subunit B from Prochlorococcus marinus (strain MIT 9215).